The chain runs to 393 residues: NAD(P)H-quinone oxidoreductase subunit H, chloroplastic (393 aa).

This sequence belongs to the complex I 49 kDa subunit family. As to quaternary structure, NDH is composed of at least 16 different subunits, 5 of which are encoded in the nucleus.

It is found in the plastid. The protein localises to the chloroplast thylakoid membrane. The enzyme catalyses a plastoquinone + NADH + (n+1) H(+)(in) = a plastoquinol + NAD(+) + n H(+)(out). It carries out the reaction a plastoquinone + NADPH + (n+1) H(+)(in) = a plastoquinol + NADP(+) + n H(+)(out). In terms of biological role, NDH shuttles electrons from NAD(P)H:plastoquinone, via FMN and iron-sulfur (Fe-S) centers, to quinones in the photosynthetic chain and possibly in a chloroplast respiratory chain. The immediate electron acceptor for the enzyme in this species is believed to be plastoquinone. Couples the redox reaction to proton translocation, and thus conserves the redox energy in a proton gradient. In Ranunculus macranthus (Large buttercup), this protein is NAD(P)H-quinone oxidoreductase subunit H, chloroplastic.